The sequence spans 93 residues: uncharacterized protein (93 aa).

Residues 25–68 adopt a coiled-coil conformation; the sequence is DIKKLSQVKSELEQGKALLEEEKKELIEKNSNLNLQISNMNHLK.

This is an uncharacterized protein from Dictyostelium discoideum (Social amoeba).